Consider the following 182-residue polypeptide: Adenine phosphoribosyltransferase (182 aa).

The protein belongs to the purine/pyrimidine phosphoribosyltransferase family. Homodimer.

Its subcellular location is the cytoplasm. The enzyme catalyses AMP + diphosphate = 5-phospho-alpha-D-ribose 1-diphosphate + adenine. It participates in purine metabolism; AMP biosynthesis via salvage pathway; AMP from adenine: step 1/1. In terms of biological role, catalyzes a salvage reaction resulting in the formation of AMP, that is energically less costly than de novo synthesis. The sequence is that of Adenine phosphoribosyltransferase from Pseudomonas putida (strain GB-1).